The primary structure comprises 365 residues: tRNA/tmRNA (uracil-C(5))-methyltransferase (365 aa).

S-adenosyl-L-methionine is bound by residues glutamine 189, tyrosine 217, asparagine 222, glutamate 238, and aspartate 298. Residue cysteine 323 is the Nucleophile of the active site. Residue glutamate 357 is the Proton acceptor of the active site.

It belongs to the class I-like SAM-binding methyltransferase superfamily. RNA M5U methyltransferase family. TrmA subfamily.

It carries out the reaction uridine(54) in tRNA + S-adenosyl-L-methionine = 5-methyluridine(54) in tRNA + S-adenosyl-L-homocysteine + H(+). The enzyme catalyses uridine(341) in tmRNA + S-adenosyl-L-methionine = 5-methyluridine(341) in tmRNA + S-adenosyl-L-homocysteine + H(+). Functionally, dual-specificity methyltransferase that catalyzes the formation of 5-methyluridine at position 54 (m5U54) in all tRNAs, and that of position 341 (m5U341) in tmRNA (transfer-mRNA). This Pseudoalteromonas atlantica (strain T6c / ATCC BAA-1087) protein is tRNA/tmRNA (uracil-C(5))-methyltransferase.